Here is a 304-residue protein sequence, read N- to C-terminus: Transmembrane protein 178A (304 aa).

The N-terminal stretch at 1–25 (MESRGLVTAVSLTLSICSLLLLVTA) is a signal peptide. Residues 26–186 (IFTDHWYETD…LLHLRRITAG (161 aa)) are Extracellular-facing. N-linked (GlcNAc...) asparagine glycosylation is present at asparagine 165. A helical membrane pass occupies residues 187–207 (FLGMAAAVLLCGCIVAAISFF). At 208–215 (WEESLTQH) the chain is on the cytoplasmic side. The helical transmembrane segment at 216 to 236 (VAGLLFLMTGIFCTISLCTYA) threads the bilayer. Topologically, residues 237–267 (ASVAYELNRQPKFIYGLPSDVEHGYSWSLFC) are extracellular. The chain crosses the membrane as a helical span at residues 268-288 (AWCSLGLIVAAGCLCTAYPFI). The Cytoplasmic portion of the chain corresponds to 289–304 (SRTKILHLKFARDSCV).

It belongs to the TMEM178 family.

It localises to the endoplasmic reticulum membrane. May act as a negative regulator of osteoclast differentiation. This chain is Transmembrane protein 178A (tmem178a), found in Xenopus laevis (African clawed frog).